The primary structure comprises 179 residues: Shikimate kinase (179 aa).

Residue 12–17 (GVGKSK) participates in ATP binding. S16 is a binding site for Mg(2+). Substrate-binding residues include D34, R61, and G83. An ATP-binding site is contributed by R131. A substrate-binding site is contributed by R147.

It belongs to the shikimate kinase family. As to quaternary structure, monomer. The cofactor is Mg(2+).

It localises to the cytoplasm. The catalysed reaction is shikimate + ATP = 3-phosphoshikimate + ADP + H(+). Its pathway is metabolic intermediate biosynthesis; chorismate biosynthesis; chorismate from D-erythrose 4-phosphate and phosphoenolpyruvate: step 5/7. Functionally, catalyzes the specific phosphorylation of the 3-hydroxyl group of shikimic acid using ATP as a cosubstrate. The protein is Shikimate kinase of Leptospira borgpetersenii serovar Hardjo-bovis (strain JB197).